The following is a 30-amino-acid chain: Dermaseptin-3.1TR (30 aa).

In terms of tissue distribution, expressed by the skin glands.

The protein resides in the secreted. In terms of biological role, has antimicrobial activity. This chain is Dermaseptin-3.1TR, found in Phyllomedusa trinitatis (Trinidad leaf frog).